Consider the following 152-residue polypeptide: MANKFVITWDNMQMYTRQLAEQLLPAEQWKGILAVSRGGLVPAAILARELNIRYVDTVCISSYDHDHQRDMTVVKAMEGDGEGFIIIDDLVDSGDTAVKLRQMYPKGKLVTVCAKPAGIDLVDAYVVDIPQDTWIEQPWDMAVTYVDPICKK.

5-phospho-alpha-D-ribose 1-diphosphate is bound by residues 37–38 (RG), arginine 69, and 88–96 (DDLVDSGDT). Arginine 69 is a GMP binding site. Mg(2+) is bound at residue aspartate 89. Guanine is bound by residues aspartate 92 and isoleucine 135. Aspartate 92 and isoleucine 135 together coordinate xanthine. Residues 92 to 96 (DSGDT) and 134 to 135 (WI) contribute to the GMP site.

It belongs to the purine/pyrimidine phosphoribosyltransferase family. XGPT subfamily. In terms of assembly, homotetramer. It depends on Mg(2+) as a cofactor.

The protein localises to the cell inner membrane. It catalyses the reaction GMP + diphosphate = guanine + 5-phospho-alpha-D-ribose 1-diphosphate. The catalysed reaction is XMP + diphosphate = xanthine + 5-phospho-alpha-D-ribose 1-diphosphate. The enzyme catalyses IMP + diphosphate = hypoxanthine + 5-phospho-alpha-D-ribose 1-diphosphate. Its pathway is purine metabolism; GMP biosynthesis via salvage pathway; GMP from guanine: step 1/1. It functions in the pathway purine metabolism; XMP biosynthesis via salvage pathway; XMP from xanthine: step 1/1. In terms of biological role, purine salvage pathway enzyme that catalyzes the transfer of the ribosyl-5-phosphate group from 5-phospho-alpha-D-ribose 1-diphosphate (PRPP) to the N9 position of the 6-oxopurines guanine and xanthine to form the corresponding ribonucleotides GMP (guanosine 5'-monophosphate) and XMP (xanthosine 5'-monophosphate), with the release of PPi. To a lesser extent, also acts on hypoxanthine. The protein is Xanthine-guanine phosphoribosyltransferase of Aliivibrio salmonicida (strain LFI1238) (Vibrio salmonicida (strain LFI1238)).